The chain runs to 917 residues: Alanine--tRNA ligase (917 aa).

4 residues coordinate Zn(2+): His615, His619, Cys719, and His723.

It belongs to the class-II aminoacyl-tRNA synthetase family. The cofactor is Zn(2+).

It localises to the cytoplasm. It catalyses the reaction tRNA(Ala) + L-alanine + ATP = L-alanyl-tRNA(Ala) + AMP + diphosphate. Functionally, catalyzes the attachment of alanine to tRNA(Ala) in a two-step reaction: alanine is first activated by ATP to form Ala-AMP and then transferred to the acceptor end of tRNA(Ala). Also edits incorrectly charged Ser-tRNA(Ala) and Gly-tRNA(Ala) via its editing domain. This Thermococcus kodakarensis (strain ATCC BAA-918 / JCM 12380 / KOD1) (Pyrococcus kodakaraensis (strain KOD1)) protein is Alanine--tRNA ligase.